The chain runs to 618 residues: DNA mismatch repair protein MutL (618 aa).

The segment covering E367 to G381 has biased composition (low complexity). The disordered stretch occupies residues E367–G402. Positions G382–S392 are enriched in gly residues.

Belongs to the DNA mismatch repair MutL/HexB family.

Functionally, this protein is involved in the repair of mismatches in DNA. It is required for dam-dependent methyl-directed DNA mismatch repair. May act as a 'molecular matchmaker', a protein that promotes the formation of a stable complex between two or more DNA-binding proteins in an ATP-dependent manner without itself being part of a final effector complex. This Salmonella dublin (strain CT_02021853) protein is DNA mismatch repair protein MutL.